The sequence spans 384 residues: METRDVLIVGGGVIGCATAYELSQYKLKVTLVEKHHYLAQETSHANSGVIHTGIDPNPHKLTAKYNILGKKLWLNTYFKRLGFPRQKIRTLIVAFNEMEREQLEVLKQRGIANQINLEDIQMLSKEETLKLEPYVNPEIVAGLKIEGSWAIDPVLASKCLALAAQQNKVQICTNTEVTNISKQVDGTYLVWTNNETTPSFKVKKIIDAAGHYADYLAHLAKADDFEQTTRRGQYVVVTNQGELHLNSMVFMVPTIHGKGVIVSPMLDGNFLVGPTALDGVDKEATRYITKDAPCMLTKIGKHMVPSLNINNALISFAGSRPIDKATNDFIIRVAHNDPDFVILGGMKSPGLTAAPAIVREAVRLLNWKLTKKPNWNGKYNLPWI.

The N-terminal stretch at 1 to 15 is a signal peptide; sequence METRDVLIVGGGVIG. FAD is bound at residue isoleucine 14. Residue cysteine 16 is the site of N-palmitoyl cysteine attachment. Cysteine 16 is lipidated: S-diacylglycerol cysteine. FAD-binding positions include glutamate 33, 42-43, and 47-49; these read TS and SGV. Sn-glycerol 3-phosphate-binding residues include serine 47 and histidine 51. Histidine 51 serves as the catalytic Proton acceptor. An FAD-binding site is contributed by valine 177. Sn-glycerol 3-phosphate-binding residues include lysine 258 and arginine 320. Position 346–347 (346–347) interacts with FAD; sequence MK. Serine 348 contacts sn-glycerol 3-phosphate. Threonine 352 is a binding site for FAD.

In terms of assembly, monomer. The cofactor is FAD.

Its subcellular location is the cytoplasm. The protein localises to the cell membrane. It carries out the reaction sn-glycerol 3-phosphate + O2 = dihydroxyacetone phosphate + H2O2. It participates in polyol metabolism; glycerol degradation via glycerol kinase pathway; glycerone phosphate from sn-glycerol 3-phosphate (aerobic route): step 1/1. Functionally, catalyzes the oxidation of glycerol 3-phosphate to dihydroxyacetone phosphate (DHAP), with a reduction of O2 to H2O2. The formation of hydrogen peroxide by this enzyme is crucial for cytotoxic effects of M.pneumoniae on host cells. Is involved in the metabolism of glycerol and is essential for glycerol utilization; glycerol is one of the few carbon sources that can be utilized by M.pneumoniae for growth. To a lesser extent, is also able to use glyceraldehyde 3-phosphate (GAP), an intermediate in the glycolysis pathway, as a substrate (but the structure of the product has not been elucidated). Therefore, in the absence of glycerol, GAP may serve as a substrate in the GlpO reaction to supply H2O2 during mycoplasma infection. Does not show any dehydrogenase activity with NAD(+). In Mycoplasma pneumoniae (strain ATCC 29342 / M129 / Subtype 1) (Mycoplasmoides pneumoniae), this protein is Glycerol 3-phosphate oxidase.